We begin with the raw amino-acid sequence, 261 residues long: Tryptophan synthase alpha chain (261 aa).

Residues Glu49 and Asp60 each act as proton acceptor in the active site.

Belongs to the TrpA family. As to quaternary structure, tetramer of two alpha and two beta chains.

The enzyme catalyses (1S,2R)-1-C-(indol-3-yl)glycerol 3-phosphate + L-serine = D-glyceraldehyde 3-phosphate + L-tryptophan + H2O. It functions in the pathway amino-acid biosynthesis; L-tryptophan biosynthesis; L-tryptophan from chorismate: step 5/5. Its function is as follows. The alpha subunit is responsible for the aldol cleavage of indoleglycerol phosphate to indole and glyceraldehyde 3-phosphate. The chain is Tryptophan synthase alpha chain from Roseiflexus castenholzii (strain DSM 13941 / HLO8).